A 549-amino-acid polypeptide reads, in one-letter code: Glucose-6-phosphate isomerase (549 aa).

The Proton donor role is filled by glutamate 353. Active-site residues include histidine 384 and lysine 513.

Belongs to the GPI family.

The protein resides in the cytoplasm. It carries out the reaction alpha-D-glucose 6-phosphate = beta-D-fructose 6-phosphate. Its pathway is carbohydrate biosynthesis; gluconeogenesis. The protein operates within carbohydrate degradation; glycolysis; D-glyceraldehyde 3-phosphate and glycerone phosphate from D-glucose: step 2/4. In terms of biological role, catalyzes the reversible isomerization of glucose-6-phosphate to fructose-6-phosphate. This is Glucose-6-phosphate isomerase from Bartonella bacilliformis (strain ATCC 35685 / KC583 / Herrer 020/F12,63).